The chain runs to 230 residues: Uracil-DNA glycosylase (230 aa).

Catalysis depends on D70, which acts as the Proton acceptor.

It belongs to the uracil-DNA glycosylase (UDG) superfamily. UNG family.

It localises to the cytoplasm. It catalyses the reaction Hydrolyzes single-stranded DNA or mismatched double-stranded DNA and polynucleotides, releasing free uracil.. In terms of biological role, excises uracil residues from the DNA which can arise as a result of misincorporation of dUMP residues by DNA polymerase or due to deamination of cytosine. The polypeptide is Uracil-DNA glycosylase (Pseudomonas fluorescens (strain ATCC BAA-477 / NRRL B-23932 / Pf-5)).